The following is a 75-amino-acid chain: Sec-independent protein translocase protein TatA (75 aa).

A helical membrane pass occupies residues 1–21 (MGGFSIWHWLIVLVIVLLVFG). The disordered stretch occupies residues 41 to 75 (KGMHDDDKPAGKLGDDSRTAEQAREAQAERDRDAR).

It belongs to the TatA/E family. As to quaternary structure, the Tat system comprises two distinct complexes: a TatABC complex, containing multiple copies of TatA, TatB and TatC subunits, and a separate TatA complex, containing only TatA subunits. Substrates initially bind to the TatABC complex, which probably triggers association of the separate TatA complex to form the active translocon.

It is found in the cell inner membrane. Functionally, part of the twin-arginine translocation (Tat) system that transports large folded proteins containing a characteristic twin-arginine motif in their signal peptide across membranes. TatA could form the protein-conducting channel of the Tat system. The sequence is that of Sec-independent protein translocase protein TatA from Xanthomonas axonopodis pv. citri (strain 306).